A 119-amino-acid polypeptide reads, in one-letter code: DNA-binding protein inhibitor ID-3 (119 aa).

The bHLH domain occupies 28–80 (RGKSPAAEEPLSLLDDMNHCYSRLRELVPGVPRGTQLSQVEILQRVIDYILDL).

Homodimer, and heterodimer with other HLH proteins. Interacts with COPS5 and COPS7A. Interacts with IFI204. Interacts with GATA4 and NKX2-5. Interacts with ANKRD2; both proteins cooperate in myoblast differentiation. Interacts with CLOCK and BMAL1.

It is found in the nucleus. Its function is as follows. Transcriptional regulator (lacking a basic DNA binding domain) which negatively regulates the basic helix-loop-helix (bHLH) transcription factors by forming heterodimers and inhibiting their DNA binding and transcriptional activity. Implicated in regulating a variety of cellular processes, including cellular growth, senescence, differentiation, apoptosis, angiogenesis, and neoplastic transformation. Involved in myogenesis by inhibiting skeletal muscle and cardiac myocyte differentiation and promoting muscle precursor cells proliferation. Inhibits the binding of E2A-containing protein complexes to muscle creatine kinase E-box enhancer. Regulates the circadian clock by repressing the transcriptional activator activity of the CLOCK-BMAL1 heterodimer. This is DNA-binding protein inhibitor ID-3 (ID3) from Bos taurus (Bovine).